A 504-amino-acid polypeptide reads, in one-letter code: AMP phosphorylase (504 aa).

Residues glycine 169, serine 195–serine 200, and threonine 204 each bind AMP. The Proton donor role is filled by aspartate 257. Residues serine 265 and lysine 289 each coordinate AMP.

Belongs to the thymidine/pyrimidine-nucleoside phosphorylase family. Type 2 subfamily.

It catalyses the reaction AMP + phosphate = alpha-D-ribose 1,5-bisphosphate + adenine. The enzyme catalyses CMP + phosphate = cytosine + alpha-D-ribose 1,5-bisphosphate. It carries out the reaction UMP + phosphate = alpha-D-ribose 1,5-bisphosphate + uracil. Functionally, catalyzes the conversion of AMP and phosphate to adenine and ribose 1,5-bisphosphate (R15P). Exhibits phosphorylase activity toward CMP and UMP in addition to AMP. Functions in an archaeal AMP degradation pathway, together with R15P isomerase and RubisCO. This chain is AMP phosphorylase, found in Methanococcus aeolicus (strain ATCC BAA-1280 / DSM 17508 / OCM 812 / Nankai-3).